The sequence spans 244 residues: 3-deoxy-manno-octulosonate cytidylyltransferase (244 aa).

The protein belongs to the KdsB family.

The protein localises to the cytoplasm. The catalysed reaction is 3-deoxy-alpha-D-manno-oct-2-ulosonate + CTP = CMP-3-deoxy-beta-D-manno-octulosonate + diphosphate. The protein operates within nucleotide-sugar biosynthesis; CMP-3-deoxy-D-manno-octulosonate biosynthesis; CMP-3-deoxy-D-manno-octulosonate from 3-deoxy-D-manno-octulosonate and CTP: step 1/1. Its pathway is bacterial outer membrane biogenesis; lipopolysaccharide biosynthesis. In terms of biological role, activates KDO (a required 8-carbon sugar) for incorporation into bacterial lipopolysaccharide in Gram-negative bacteria. The polypeptide is 3-deoxy-manno-octulosonate cytidylyltransferase (Vesicomyosocius okutanii subsp. Calyptogena okutanii (strain HA)).